Consider the following 852-residue polypeptide: METRYSAADIEAKWQQQWLELGLDKTPSQSDKPKFYALSMFPYPSGKLHMGHVRNYVITDVIARYKRMQGYRVLHPMGWDAFGLPAENAAIDRGIPPAKWTYQNIAQMREQLKQLGLSIDWDREVATCSPDYYKWTQWLFLQFYKAGLAYQKEAAVNWDPIDQTVLANEQVDAEGRSWRSGAIVEKKLLRQWFLKITDYAEELLQDLNTLDGWPERVKLMQENWIGKSTGAHLEFPVVGSDEKVAVFTTRLDTVFGVTYVVLAPEHPLVAQVTTPAQKAAVDAFIAEVSQESEQDRTADDKPKKGVATGGMVTNPFTGEEVPILIANYVLYEYGTGAVMGVPAHDSRDCKFAKENNLPIKMVIIPEGGDATAVLTEAYTEAGIMVNSGQFDGLVSTEGKKAIAKFAAENGFGREQIQYRLRDWLISRQRYWGCPIPMIYCDDCGVVPVPDSDLPVVLPEDVEFSARGGSPLAQMADWQAVDCPCCGKAARRETDTMDTFIDSSWYFLRYTDANNTEKPFALDPVNDWMAVDQYVGGIEHAILHLLYSRFFTKVVRDRQLVSVDEPFKRLLTQGMVQALTYKNPRTNKYVPADQVDPNDPKDPETGEPLTGFYEKMSKSKYNGVDPALVLDKYGADTARMFILFKAPPEKDLEWDDADVEGQFRFLNRIWNLVAGYEAAETSVKATGELSKAEKDLRRAVHTAIKEIQEDLEGDYQFNTAIAELMKLNNAIKDVKCVDSPVYKEAIETLILLLAPFAPHIADELWSNLGHSESIHTVPFPQLDETALTVDEITIVIQILGKTRGTIQVPAGISKADLEKTATASDIAQRYIAGKEIKKVIVVPNKLVNFVIPK.

The short motif at 42–52 (PYPSGKLHMGH) is the 'HIGH' region element. Residues 586 to 606 (NKYVPADQVDPNDPKDPETGE) are disordered. The short motif at 614-618 (KMSKS) is the 'KMSKS' region element. Lysine 617 contacts ATP.

It belongs to the class-I aminoacyl-tRNA synthetase family.

It localises to the cytoplasm. The catalysed reaction is tRNA(Leu) + L-leucine + ATP = L-leucyl-tRNA(Leu) + AMP + diphosphate. The protein is Leucine--tRNA ligase of Picosynechococcus sp. (strain ATCC 27264 / PCC 7002 / PR-6) (Agmenellum quadruplicatum).